Reading from the N-terminus, the 250-residue chain is 2,3-bisphosphoglycerate-dependent phosphoglycerate mutase (250 aa).

Substrate contacts are provided by residues 8–15 (RHGESQWN), 21–22 (TG), Arg60, 87–90 (ERHY), Lys98, 114–115 (RR), and 183–184 (GN). The active-site Tele-phosphohistidine intermediate is the His9. Glu87 acts as the Proton donor/acceptor in catalysis.

Belongs to the phosphoglycerate mutase family. BPG-dependent PGAM subfamily. Homodimer.

The catalysed reaction is (2R)-2-phosphoglycerate = (2R)-3-phosphoglycerate. It functions in the pathway carbohydrate degradation; glycolysis; pyruvate from D-glyceraldehyde 3-phosphate: step 3/5. Functionally, catalyzes the interconversion of 2-phosphoglycerate and 3-phosphoglycerate. The chain is 2,3-bisphosphoglycerate-dependent phosphoglycerate mutase from Bordetella pertussis (strain Tohama I / ATCC BAA-589 / NCTC 13251).